We begin with the raw amino-acid sequence, 328 residues long: Biotin synthase (328 aa).

In terms of domain architecture, Radical SAM core spans 43-272 (NVVQKASLLS…KSTVRLSAGR (230 aa)). Cysteine 58, cysteine 62, and cysteine 65 together coordinate [4Fe-4S] cluster. Positions 103, 135, 195, and 267 each coordinate [2Fe-2S] cluster.

This sequence belongs to the radical SAM superfamily. Biotin synthase family. Homodimer. Requires [4Fe-4S] cluster as cofactor. [2Fe-2S] cluster serves as cofactor.

It catalyses the reaction (4R,5S)-dethiobiotin + (sulfur carrier)-SH + 2 reduced [2Fe-2S]-[ferredoxin] + 2 S-adenosyl-L-methionine = (sulfur carrier)-H + biotin + 2 5'-deoxyadenosine + 2 L-methionine + 2 oxidized [2Fe-2S]-[ferredoxin]. Its pathway is cofactor biosynthesis; biotin biosynthesis; biotin from 7,8-diaminononanoate: step 2/2. In terms of biological role, catalyzes the conversion of dethiobiotin (DTB) to biotin by the insertion of a sulfur atom into dethiobiotin via a radical-based mechanism. This chain is Biotin synthase, found in Allorhizobium ampelinum (strain ATCC BAA-846 / DSM 112012 / S4) (Agrobacterium vitis (strain S4)).